Reading from the N-terminus, the 241-residue chain is Spiralin (241 aa).

Residues 1–23 (MKKLLSILAVFGVSAVGTTSVVA) form the signal peptide. A lipid anchor (N-palmitoyl cysteine) is attached at Cys24. Cys24 is lipidated: S-diacylglycerol cysteine.

It belongs to the spiralin family. In terms of assembly, seems to occur as dimer, tetramers, and large oligomers of identical chains. Post-translationally, palmitate and stearate are the major lipid components.

Its subcellular location is the cell membrane. Its function is as follows. Major membrane protein of spiroplasma. The sequence is that of Spiralin (spi) from Spiroplasma citri.